A 75-amino-acid polypeptide reads, in one-letter code: Vacuolar ATPase assembly integral membrane protein VMA21 (75 aa).

Topologically, residues 1–8 (MPVDVAPG) are cytoplasmic. Residues 9-29 (VIKKLMFFTAAMVICPLLTFF) traverse the membrane as a helical segment. Topologically, residues 30–41 (SIKQFTTNTIVS) are lumenal. The helical transmembrane segment at 42–62 (GGLAALAANLVLIGYIVVAFM) threads the bilayer. Residues 63 to 75 (EDTTDVKAESKKD) lie on the Cytoplasmic side of the membrane.

It belongs to the VMA21 family.

The protein resides in the endoplasmic reticulum membrane. It localises to the endoplasmic reticulum-Golgi intermediate compartment membrane. The protein localises to the cytoplasmic vesicle. Its subcellular location is the COPII-coated vesicle membrane. Its function is as follows. Required for the assembly of the V0 complex of the vacuolar ATPase (V-ATPase) in the endoplasmic reticulum. The sequence is that of Vacuolar ATPase assembly integral membrane protein VMA21 from Vanderwaltozyma polyspora (strain ATCC 22028 / DSM 70294 / BCRC 21397 / CBS 2163 / NBRC 10782 / NRRL Y-8283 / UCD 57-17) (Kluyveromyces polysporus).